A 91-amino-acid polypeptide reads, in one-letter code: ATP synthase subunit c (91 aa).

Helical transmembrane passes span 4–24 and 53–73; these read FTMCVLAAGIGMALGTLGTGI and IGLAMIESLAIYALVVCLIIL.

This sequence belongs to the ATPase C chain family. F-type ATPases have 2 components, F(1) - the catalytic core - and F(0) - the membrane proton channel. F(1) has five subunits: alpha(3), beta(3), gamma(1), delta(1), epsilon(1). F(0) has three main subunits: a(1), b(2) and c(10-14). The alpha and beta chains form an alternating ring which encloses part of the gamma chain. F(1) is attached to F(0) by a central stalk formed by the gamma and epsilon chains, while a peripheral stalk is formed by the delta and b chains.

It is found in the cell inner membrane. Functionally, f(1)F(0) ATP synthase produces ATP from ADP in the presence of a proton or sodium gradient. F-type ATPases consist of two structural domains, F(1) containing the extramembraneous catalytic core and F(0) containing the membrane proton channel, linked together by a central stalk and a peripheral stalk. During catalysis, ATP synthesis in the catalytic domain of F(1) is coupled via a rotary mechanism of the central stalk subunits to proton translocation. In terms of biological role, key component of the F(0) channel; it plays a direct role in translocation across the membrane. A homomeric c-ring of between 10-14 subunits forms the central stalk rotor element with the F(1) delta and epsilon subunits. In Geotalea daltonii (strain DSM 22248 / JCM 15807 / FRC-32) (Geobacter daltonii), this protein is ATP synthase subunit c.